A 112-amino-acid chain; its full sequence is Large ribosomal subunit protein eL30 (112 aa).

The protein belongs to the eukaryotic ribosomal protein eL30 family.

The chain is Large ribosomal subunit protein eL30 (rpl30) from Dictyostelium discoideum (Social amoeba).